We begin with the raw amino-acid sequence, 148 residues long: Large ribosomal subunit protein bL9 (148 aa).

The protein belongs to the bacterial ribosomal protein bL9 family.

Binds to the 23S rRNA. The polypeptide is Large ribosomal subunit protein bL9 (Oceanobacillus iheyensis (strain DSM 14371 / CIP 107618 / JCM 11309 / KCTC 3954 / HTE831)).